A 255-amino-acid chain; its full sequence is Postacrosomal sheath WW domain-binding protein (255 aa).

Residues 15–87 form the GRAM domain; sequence LIPNGESLLK…DLITNLTVEQ (73 aa). Tandem repeats lie at residues 139-145, 146-152, 153-159, 160-166, 167-173, 174-180, and 202-208. The tract at residues 139-208 is 6 X 7 AA tandem repeat of Y-G-X-P-P-X-G; the sequence is YGAPPAGYGA…PAGYGAPPLG (70 aa). Positions 171–174 match the PPxY motif motif; it reads PPGY. 2 disordered regions span residues 180–199 and 204–255; these read GYGA…RASP and APPL…ASSS.

Its function is as follows. May play a role in meiotic resumption and pronuclear formation, mediated by a WW domain-signaling pathway during fertilization. This Macaca fascicularis (Crab-eating macaque) protein is Postacrosomal sheath WW domain-binding protein (WBP2NL).